The primary structure comprises 147 residues: uncharacterized protein (147 aa).

4 consecutive transmembrane segments (helical) span residues 13–33 (LSLVFGLLFTVSGIIEIIIGL), 45–65 (LFVGDVFGGLALLAVGIAYFL), 80–100 (YLFTASIIGLGIGVIAFLILI), and 116–136 (WGFFNDLTVYLVLGMLAIIPY).

The protein localises to the cell membrane. This is an uncharacterized protein from Methanocaldococcus jannaschii (strain ATCC 43067 / DSM 2661 / JAL-1 / JCM 10045 / NBRC 100440) (Methanococcus jannaschii).